A 337-amino-acid chain; its full sequence is Probable phospholipase A1 magnifin (337 aa).

The N-terminal stretch at 1–21 is a signal peptide; it reads MNLKYLLLFFCLVQVLHYCYS. Positions 22 to 33 are excised as a propeptide; that stretch reads HGDPSLSNELDR. Cysteine 39 and cysteine 123 are oxidised to a cystine. Serine 173 acts as the Nucleophile in catalysis. Aspartate 201 (charge relay system) is an active-site residue. 2 disulfides stabilise this stretch: cysteine 212-cysteine 217 and cysteine 255-cysteine 264. Catalysis depends on histidine 266, which acts as the Charge relay system. 3 disulfides stabilise this stretch: cysteine 281–cysteine 305, cysteine 282–cysteine 330, and cysteine 298–cysteine 303.

This sequence belongs to the AB hydrolase superfamily. Lipase family. Expressed by the venom gland.

It localises to the secreted. The enzyme catalyses a 1,2-diacyl-sn-glycero-3-phosphocholine + H2O = a 2-acyl-sn-glycero-3-phosphocholine + a fatty acid + H(+). In terms of biological role, catalyzes the hydrolysis of phosphatidylcholine with phospholipase A1 activity. May act as an allergen and induce hemolytic activity. In vivo, induces dose-dependent platelet aggregation (nanomolar concentration) and induces thrombosis. The chain is Probable phospholipase A1 magnifin from Vespa magnifica (Hornet).